Here is a 580-residue protein sequence, read N- to C-terminus: Long-chain-fatty-acid--AMP ligase FadD28 (580 aa).

The tract at residues 421–440 is disordered; the sequence is SERTFGGKIVTPSPGTPEGP.

Belongs to the ATP-dependent AMP-binding enzyme family.

The catalysed reaction is holo-[mycocerosate synthase] + a long-chain fatty acid + ATP = a long-chain fatty acyl-[mycocerosate synthase] + AMP + diphosphate. It carries out the reaction a long-chain fatty acid + ATP + H(+) = a long-chain fatty acyl-AMP + diphosphate. It catalyses the reaction holo-[mycocerosate synthase] + a long-chain fatty acyl-AMP = a long-chain fatty acyl-[mycocerosate synthase] + AMP + H(+). The protein operates within lipid metabolism; fatty acid biosynthesis. Functionally, involved in the biosynthesis of phthiocerol dimycocerosate (PDIM), a cell wall-associated lipid found only in pathogenic mycobacteria. Catalyzes the activation of long-chain fatty acids as acyl-adenylates (acyl-AMP), which are then transferred to the multifunctional polyketide synthase Mas for further chain extension. The chain is Long-chain-fatty-acid--AMP ligase FadD28 (fadD28) from Mycobacterium tuberculosis (strain CDC 1551 / Oshkosh).